The chain runs to 626 residues: Chaperone protein HtpG (626 aa).

Residues 1–339 (MSTNQETRGF…SNDLPLNVSR (339 aa)) form an a; substrate-binding region. The b stretch occupies residues 340 to 555 (EILQDNKVTA…NDQMTTQMAK (216 aa)). Positions 556–626 (LFAAAGQPVP…FIKRINKLLG (71 aa)) are c.

This sequence belongs to the heat shock protein 90 family. In terms of assembly, homodimer.

It localises to the cytoplasm. Functionally, molecular chaperone. Has ATPase activity. This Aggregatibacter actinomycetemcomitans (Actinobacillus actinomycetemcomitans) protein is Chaperone protein HtpG.